The sequence spans 556 residues: Formate--tetrahydrofolate ligase (556 aa).

65–72 serves as a coordination point for ATP; the sequence is TPAGEGKS.

It belongs to the formate--tetrahydrofolate ligase family.

It catalyses the reaction (6S)-5,6,7,8-tetrahydrofolate + formate + ATP = (6R)-10-formyltetrahydrofolate + ADP + phosphate. Its pathway is one-carbon metabolism; tetrahydrofolate interconversion. The polypeptide is Formate--tetrahydrofolate ligase (Enterococcus faecalis (strain ATCC 700802 / V583)).